Here is a 184-residue protein sequence, read N- to C-terminus: GTP cyclohydrolase 1 (184 aa).

Zn(2+) contacts are provided by Cys-75, His-78, and Cys-146.

Belongs to the GTP cyclohydrolase I family. As to quaternary structure, homomer.

It catalyses the reaction GTP + H2O = 7,8-dihydroneopterin 3'-triphosphate + formate + H(+). The protein operates within cofactor biosynthesis; 7,8-dihydroneopterin triphosphate biosynthesis; 7,8-dihydroneopterin triphosphate from GTP: step 1/1. This chain is GTP cyclohydrolase 1, found in Streptococcus pneumoniae (strain Hungary19A-6).